A 791-amino-acid polypeptide reads, in one-letter code: Ataxin-1 (791 aa).

Positions 1–30 (MKSNQERSNECLPPKKREIPATSRPSEEKA) are enriched in basic and acidic residues. The disordered stretch occupies residues 1–36 (MKSNQERSNECLPPKKREIPATSRPSEEKATALPSD). K16 participates in a covalent cross-link: Glycyl lysine isopeptide (Lys-Gly) (interchain with G-Cter in SUMO). A phosphoserine mark is found at S81 and S87. Disordered stretches follow at residues 187 to 240 (SQAP…TSPP) and 298 to 402 (EVLN…HRSY). K193 is covalently cross-linked (Glycyl lysine isopeptide (Lys-Gly) (interchain with G-Cter in SUMO)). S213 carries the phosphoserine modification. At T218 the chain carries Phosphothreonine. Composition is skewed to polar residues over residues 219–236 (QQNQ…SGRA), 312–327 (ASSS…SSKS), and 362–388 (PNSS…TLND). S229 bears the Phosphoserine mark. Positions 470–580 (VGSPDMDTPG…TEDFIQSAEI (111 aa)) are self-association. The interaction with USP7 stretch occupies residues 514-791 (LVTQAAYPAM…CIEGRSNVGK (278 aa)). An RNA-binding region spans residues 516–742 (TQAAYPAMVQ…FLSKIEPSKP (227 aa)). Residues 538 to 669 (SPTTASPTLP…SLTLKNLKNG (132 aa)) enclose the AXH domain. Glycyl lysine isopeptide (Lys-Gly) (interchain with G-Cter in SUMO) cross-links involve residues K585, K672, and K721. The segment at 736-774 (KIEPSKPTATRKRRWSAPETRKLEKSEDEPPLTLPKPSL) is disordered. S751 is subject to Phosphoserine. The Nuclear localization signal signature appears at 770–773 (PKPS).

Belongs to the ATXN1 family. In terms of assembly, homooligomer. Interacts with PQBP1, UBQLN4 and USP7. Interacts with ANP32A. Interacts with CIC. Directly interacts with RBPJ; this interaction is disrupted in the presence of Notch intracellular domain. Interacts with ATXN1L; competes with ATXN1L for RBPJ-binding. Found in a complex with CIC and ATXN1L. Ubiquitinated by UBE3A, leading to its degradation by the proteasome. The presence of poly-Gln repeats in trangenic models developed to replicate phenotypes of the spinocerebellar ataxia 1 disease (SCA1) impair ubiquitination and degradation, leading to accumulation of Atxn1 in neurons and subsequent toxicity. Post-translationally, sumoylation is dependent on nuclear localization and phosphorylation at Ser-751. As to expression, expressed in the cortex and hypothalamus (at protein level). Widely expressed. In brain, the pattern of distribution is limited to neuron populations.

It localises to the cytoplasm. It is found in the nucleus. Its function is as follows. Chromatin-binding factor that repress Notch signaling in the absence of Notch intracellular domain by acting as a CBF1 corepressor. Binds to the HEY promoter and might assist, along with NCOR2, RBPJ-mediated repression. May be involved in RNA metabolism. In concert with CIC and ATXN1L, involved in brain development. In Mus musculus (Mouse), this protein is Ataxin-1 (Atxn1).